The sequence spans 313 residues: HTH-type transcriptional regulator CysB (313 aa).

In terms of domain architecture, HTH lysR-type spans 1 to 59 (MNLHQFRFVREAVRQNFNLTEAAKALYTSQPGVSKAIIELEDELGVEIFTRHGKRVRSL). Positions 19–38 (LTEAAKALYTSQPGVSKAII) form a DNA-binding region, H-T-H motif.

This sequence belongs to the LysR transcriptional regulatory family.

Functionally, transcriptional regulator preferentially involved in the control of sulfate transport and reduction. Binds to DNA at target promoter regions. The protein is HTH-type transcriptional regulator CysB of Burkholderia cenocepacia (strain ATCC BAA-245 / DSM 16553 / LMG 16656 / NCTC 13227 / J2315 / CF5610) (Burkholderia cepacia (strain J2315)).